The primary structure comprises 733 residues: EF-hand domain-containing family member C2 (733 aa).

3 consecutive DM10 domains span residues 61–168 (DKQV…TKIG), 212–354 (DRKV…RTKY), and 416–523 (ISNT…ERNS).

In terms of assembly, microtubule inner protein component of sperm flagellar doublet microtubules. Expressed in trachea multiciliated cells.

It localises to the cytoplasm. It is found in the cytoskeleton. Its subcellular location is the cilium axoneme. The protein localises to the flagellum axoneme. Microtubule inner protein (MIP) part of the dynein-decorated doublet microtubules (DMTs) in cilia axoneme, which is required for motile cilia beating. The polypeptide is EF-hand domain-containing family member C2 (EFHC2) (Bos taurus (Bovine)).